A 97-amino-acid polypeptide reads, in one-letter code: MKLRPLHDRVVIRRSEEETKTAGGIVLPGSAAEKPNRGEIVAVGTGRVLDNGEVRALAVKVGDKVVFGPYSGSNTVKVDGEDLLVMSENEILAVVEG.

The protein belongs to the GroES chaperonin family. Heptamer of 7 subunits arranged in a ring. Interacts with the chaperonin GroEL.

The protein resides in the cytoplasm. Together with the chaperonin GroEL, plays an essential role in assisting protein folding. The GroEL-GroES system forms a nano-cage that allows encapsulation of the non-native substrate proteins and provides a physical environment optimized to promote and accelerate protein folding. GroES binds to the apical surface of the GroEL ring, thereby capping the opening of the GroEL channel. The polypeptide is Co-chaperonin GroES (Pseudomonas savastanoi pv. phaseolicola (strain 1448A / Race 6) (Pseudomonas syringae pv. phaseolicola (strain 1448A / Race 6))).